The chain runs to 425 residues: Threonine synthase (425 aa).

N6-(pyridoxal phosphate)lysine is present on lysine 105.

It belongs to the threonine synthase family. Pyridoxal 5'-phosphate is required as a cofactor.

It catalyses the reaction O-phospho-L-homoserine + H2O = L-threonine + phosphate. The protein operates within amino-acid biosynthesis; L-threonine biosynthesis; L-threonine from L-aspartate: step 5/5. Its function is as follows. Catalyzes the gamma-elimination of phosphate from L-phosphohomoserine and the beta-addition of water to produce L-threonine. In Haemophilus influenzae (strain ATCC 51907 / DSM 11121 / KW20 / Rd), this protein is Threonine synthase (thrC).